Here is a 965-residue protein sequence, read N- to C-terminus: MAKGFYISKTLGILGILLGVAAVCTIIALSVVYAQEKNRNAENSAIAPTLPGSTSATTSTTNPAIDESKPWNQYRLPKTLIPDSYQVTLRPYLTPNEQGLYIFKGSSTVRFTCNETTNVIIIHSKKLNYTNKGNHRVALRALGDTPAPNIDTTELVERTEYLVVHLQGSLVKGHQYEMDSEFQGELADDLAGFYRSEYMEGGNKKVVATTQMQAADARKSFPCFDEPAMKASFNITLIHPNNLTALSNMLPKDSRTLQEDPSWNVTEFHPTPKMSTYLLAYIVSEFKYVEAVSPNRVQIRIWARPSAIDEGHGDYALQVTGPILNFFAQHYNTAYPLEKSDQIALPDFNAGAMENWGLVTYRESALVFDPQSSSISNKERVVTVIAHELAHQWFGNLVTVDWWNDLWLNEGFASYVEFLGADYAEPTWNLKDLIVLNDVYRVMAVDALASSHPLSSPANEVNTPAQISELFDSITYSKGASVLRMLSSFLTEDLFKKGLSSYLHTFQYSNTIYLDLWEHLQQAVDSQTAIKLPASVSTIMDRWILQMGFPVITVNTSTGEIYQEHFLLDPTSKPTRPSDFNYLWIVPIPYLKNGKEDHYWLETEKNQSAEFQTSSNEWLLLNINVTGYYQVNYDENNWRKIQNQLQTDLSVIPVINRAQIIHDSFNLASAGKLSITLPLSNTLFLASETEYMPWEAALSSLNYFKLMFDRSEVYGPMKRYLKKQVTPLFAYFKIKTNNWLDRPPTLMEQYNEINAISTACSSGLEECRDLVVGLYSQWMNNSDNNPIHPNLRSTVYCNAIAFGGEEEWNFAWEQFRKATLVNEADKLRSALACSNEVWILNRYLSYTLNPDYIRKQDATSTIVSIANNVVGQTLVWDFVRSNWKKLFEDYGGGSFSFANLIQGVTRRFSSEFELQQLEQFKEDNSATGFGSGTRALEQALEKTKANIKWVKENKDVVLKWFTENS.

The Cytoplasmic portion of the chain corresponds to 2 to 8; that stretch reads AKGFYIS. Residues 9-32 form a helical; Signal-anchor for type II membrane protein membrane-spanning segment; sequence KTLGILGILLGVAAVCTIIALSVV. Residues 33–68 are cytosolic Ser/Thr-rich junction; the sequence is YAQEKNRNAENSAIAPTLPGSTSATTSTTNPAIDES. At 33–965 the chain is on the extracellular side; it reads YAQEKNRNAE…VVLKWFTENS (933 aa). The tract at residues 44–68 is disordered; the sequence is SAIAPTLPGSTSATTSTTNPAIDES. Residues 47–64 are compositionally biased toward low complexity; that stretch reads APTLPGSTSATTSTTNPA. Residues 69-965 are metalloprotease; the sequence is KPWNQYRLPK…VVLKWFTENS (897 aa). N-linked (GlcNAc...) asparagine glycosylation is found at N114 and N128. Y176 is modified (sulfotyrosine). N-linked (GlcNAc...) asparagine glycans are attached at residues N234, N242, and N264. 351–355 contacts substrate; that stretch reads GAMEN. H387 serves as a coordination point for Zn(2+). E388 (proton acceptor) is an active-site residue. H391 and E410 together coordinate Zn(2+). Residues N555, N606, and N624 are each glycosylated (N-linked (GlcNAc...) asparagine). A disulfide bridge connects residues C760 and C767. An N-linked (GlcNAc...) asparagine glycan is attached at N780. The cysteines at positions 797 and 833 are disulfide-linked. Residue Y852 is modified to Phosphotyrosine.

The protein belongs to the peptidase M1 family. In terms of assembly, homodimer. Interacts with SLC6A19. It depends on Zn(2+) as a cofactor. Sulfated. In terms of processing, N- and O-glycosylated. Post-translationally, may undergo proteolysis and give rise to a soluble form. Widely distributed throughout the CNS. Particularly abundant in kidney and intestinal microvilli, also detected in lung and liver. Weakly expressed in heart and aorta.

It is found in the cell membrane. The catalysed reaction is Release of an N-terminal amino acid, Xaa-|-Yaa- from a peptide, amide or arylamide. Xaa is preferably Ala, but may be most amino acids including Pro (slow action). When a terminal hydrophobic residue is followed by a prolyl residue, the two may be released as an intact Xaa-Pro dipeptide.. Its function is as follows. Broad specificity aminopeptidase which plays a role in the final digestion of peptides generated from hydrolysis of proteins by gastric and pancreatic proteases. Also involved in the processing of various peptides including peptide hormones, such as angiotensin III and IV, neuropeptides, and chemokines. May also be involved the cleavage of peptides bound to major histocompatibility complex class II molecules of antigen presenting cells. May have a role in angiogenesis and promote cholesterol crystallization. May have a role in amino acid transport by acting as binding partner of amino acid transporter SLC6A19 and regulating its activity. The sequence is that of Aminopeptidase N (Anpep) from Rattus norvegicus (Rat).